Here is a 199-residue protein sequence, read N- to C-terminus: Probable GTP-binding protein EngB (199 aa).

The region spanning 28–199 (DLPEIALAGR…DSWDAILEQV (172 aa)) is the EngB-type G domain. GTP-binding positions include 36-43 (GRSNVGKS), 63-67 (GKTQL), 81-84 (DVPG), 148-151 (TKAD), and 180-182 (FSS). 2 residues coordinate Mg(2+): serine 43 and threonine 65.

This sequence belongs to the TRAFAC class TrmE-Era-EngA-EngB-Septin-like GTPase superfamily. EngB GTPase family. The cofactor is Mg(2+).

Necessary for normal cell division and for the maintenance of normal septation. The sequence is that of Probable GTP-binding protein EngB from Streptococcus pyogenes serotype M3 (strain SSI-1).